A 105-amino-acid chain; its full sequence is MNPGETVLPPQLREEIALLAVYLLSSGRGLLEEPADYGIYRCTDGARRALQLLDEHGGSTARLTAVRERLDEVMFAPMGEDRDMGAILDDLCRQMADALPEIETP.

Its function is as follows. Involved in the biosynthesis of albonoursin (cyclo[(alpha,beta-dehydro-Phe)-(alpha,beta-dehydro-Leu)]), an antibacterial peptide. AlbB is essential for cyclic dipeptide oxidase AlbA (CDO) activity. This chain is Protein AlbB (albB), found in Streptomyces noursei (Streptomyces albulus).